We begin with the raw amino-acid sequence, 947 residues long: Bifunctional glutamine synthetase adenylyltransferase/adenylyl-removing enzyme (947 aa).

The interval 1-440 (MTPLSSPLSQ…VFNELIGDDE (440 aa)) is adenylyl removase. Residues 450–947 (SEPWREVWQD…ASWRKWLVAV (498 aa)) are adenylyl transferase.

It belongs to the GlnE family. Requires Mg(2+) as cofactor.

It carries out the reaction [glutamine synthetase]-O(4)-(5'-adenylyl)-L-tyrosine + phosphate = [glutamine synthetase]-L-tyrosine + ADP. The catalysed reaction is [glutamine synthetase]-L-tyrosine + ATP = [glutamine synthetase]-O(4)-(5'-adenylyl)-L-tyrosine + diphosphate. Involved in the regulation of glutamine synthetase GlnA, a key enzyme in the process to assimilate ammonia. When cellular nitrogen levels are high, the C-terminal adenylyl transferase (AT) inactivates GlnA by covalent transfer of an adenylyl group from ATP to specific tyrosine residue of GlnA, thus reducing its activity. Conversely, when nitrogen levels are low, the N-terminal adenylyl removase (AR) activates GlnA by removing the adenylyl group by phosphorolysis, increasing its activity. The regulatory region of GlnE binds the signal transduction protein PII (GlnB) which indicates the nitrogen status of the cell. The chain is Bifunctional glutamine synthetase adenylyltransferase/adenylyl-removing enzyme from Salmonella newport (strain SL254).